The primary structure comprises 359 residues: uncharacterized protein (359 aa).

An N-terminal signal peptide occupies residues 1–17 (MLGRSLTSVLIVPTGIG). A lipid anchor (N-palmitoyl cysteine) is attached at cysteine 18. Cysteine 18 carries the S-diacylglycerol cysteine lipid modification.

The protein localises to the cell membrane. This is an uncharacterized protein from Synechococcus sp. (strain ATCC 27144 / PCC 6301 / SAUG 1402/1) (Anacystis nidulans).